We begin with the raw amino-acid sequence, 160 residues long: Succinate dehydrogenase assembly factor 2-A, mitochondrial (160 aa).

The transit peptide at Met1–Val30 directs the protein to the mitochondrion.

It belongs to the SDHAF2 family. As to quaternary structure, interacts with the flavoprotein subunit within the SDH catalytic dimer.

The protein resides in the mitochondrion matrix. Plays an essential role in the assembly of succinate dehydrogenase (SDH), an enzyme complex (also referred to as respiratory complex II) that is a component of both the tricarboxylic acid (TCA) cycle and the mitochondrial electron transport chain, and which couples the oxidation of succinate to fumarate with the reduction of ubiquinone (coenzyme Q) to ubiquinol. Required for flavinylation (covalent attachment of FAD) of the flavoprotein subunit of the SDH catalytic dimer. This is Succinate dehydrogenase assembly factor 2-A, mitochondrial from Drosophila persimilis (Fruit fly).